The sequence spans 248 residues: Ubiquinone/menaquinone biosynthesis C-methyltransferase UbiE (248 aa).

S68 and D92 together coordinate S-adenosyl-L-methionine.

It belongs to the class I-like SAM-binding methyltransferase superfamily. MenG/UbiE family.

The enzyme catalyses a 2-demethylmenaquinol + S-adenosyl-L-methionine = a menaquinol + S-adenosyl-L-homocysteine + H(+). It carries out the reaction a 2-methoxy-6-(all-trans-polyprenyl)benzene-1,4-diol + S-adenosyl-L-methionine = a 5-methoxy-2-methyl-3-(all-trans-polyprenyl)benzene-1,4-diol + S-adenosyl-L-homocysteine + H(+). The protein operates within quinol/quinone metabolism; menaquinone biosynthesis; menaquinol from 1,4-dihydroxy-2-naphthoate: step 2/2. It participates in cofactor biosynthesis; ubiquinone biosynthesis. Functionally, methyltransferase required for the conversion of demethylmenaquinol (DMKH2) to menaquinol (MKH2) and the conversion of 2-polyprenyl-6-methoxy-1,4-benzoquinol (DDMQH2) to 2-polyprenyl-3-methyl-6-methoxy-1,4-benzoquinol (DMQH2). In Rickettsia conorii (strain ATCC VR-613 / Malish 7), this protein is Ubiquinone/menaquinone biosynthesis C-methyltransferase UbiE.